Reading from the N-terminus, the 465-residue chain is Cysteine--tRNA ligase (465 aa).

A Zn(2+)-binding site is contributed by Cys-27. Positions 29 to 39 match the 'HIGH' region motif; it reads PTVYDDAHLGH. 3 residues coordinate Zn(2+): Cys-207, His-237, and Glu-241. The short motif at 269-273 is the 'KMSKS' region element; it reads KMSKS. Lys-272 provides a ligand contact to ATP.

Belongs to the class-I aminoacyl-tRNA synthetase family. As to quaternary structure, monomer. Requires Zn(2+) as cofactor.

The protein resides in the cytoplasm. The enzyme catalyses tRNA(Cys) + L-cysteine + ATP = L-cysteinyl-tRNA(Cys) + AMP + diphosphate. The sequence is that of Cysteine--tRNA ligase from Helicobacter pylori (strain P12).